The sequence spans 851 residues: DNA mismatch repair protein MutS (851 aa).

Residue 614–621 coordinates ATP; the sequence is GPNMGGKS.

Belongs to the DNA mismatch repair MutS family.

Its function is as follows. This protein is involved in the repair of mismatches in DNA. It is possible that it carries out the mismatch recognition step. This protein has a weak ATPase activity. This is DNA mismatch repair protein MutS from Yersinia pestis.